The sequence spans 179 residues: Large ribosomal subunit protein uL5 (179 aa).

This sequence belongs to the universal ribosomal protein uL5 family. As to quaternary structure, part of the 50S ribosomal subunit; part of the 5S rRNA/L5/L18/L25 subcomplex. Contacts the 5S rRNA and the P site tRNA. Forms a bridge to the 30S subunit in the 70S ribosome.

In terms of biological role, this is one of the proteins that bind and probably mediate the attachment of the 5S RNA into the large ribosomal subunit, where it forms part of the central protuberance. In the 70S ribosome it contacts protein S13 of the 30S subunit (bridge B1b), connecting the 2 subunits; this bridge is implicated in subunit movement. Contacts the P site tRNA; the 5S rRNA and some of its associated proteins might help stabilize positioning of ribosome-bound tRNAs. In Aliivibrio salmonicida (strain LFI1238) (Vibrio salmonicida (strain LFI1238)), this protein is Large ribosomal subunit protein uL5.